A 190-amino-acid chain; its full sequence is Large ribosomal subunit protein uL6 (190 aa).

This sequence belongs to the universal ribosomal protein uL6 family.

This chain is Large ribosomal subunit protein uL6 (RpL9), found in Drosophila melanogaster (Fruit fly).